The chain runs to 247 residues: MNIIPCSIKTLKGLYDISGVEVGQHFYWQIGGFQIHAQVLITSWVVITILLGSVVIAVRNPQTIPTDGQNFFEYVLEFIRDLSKTQIGEEYGPWVPFIGTMFLFIFVSNWSGALLPWKIIELPHGELAAPTNDINTTVALALLTSAAYFYAGLSKKGLSYFEKYIKPTPILLPINILEDFTKPLSLSFRLFGNILADELVVVVLVSLVPLVVPIPVMFLGLFTSGIQALIFATLAAAYIGESMEGHH.

5 helical membrane-spanning segments follow: residues 38-58 (QVLI…VIAV), 95-115 (VPFI…GALL), 134-154 (INTT…AGLS), 199-219 (LVVV…VMFL), and 220-240 (GLFT…AYIG).

It belongs to the ATPase A chain family. In terms of assembly, F-type ATPases have 2 components, CF(1) - the catalytic core - and CF(0) - the membrane proton channel. CF(1) has five subunits: alpha(3), beta(3), gamma(1), delta(1), epsilon(1). CF(0) has four main subunits: a, b, b' and c.

The protein resides in the plastid. Its subcellular location is the chloroplast thylakoid membrane. Key component of the proton channel; it plays a direct role in the translocation of protons across the membrane. This is ATP synthase subunit a, chloroplastic from Agrostis stolonifera (Creeping bentgrass).